The following is a 223-amino-acid chain: Thylakoid lumenal 15.0 kDa protein 2, chloroplastic (223 aa).

It localises to the plastid. It is found in the chloroplast thylakoid lumen. In Arabidopsis thaliana (Mouse-ear cress), this protein is Thylakoid lumenal 15.0 kDa protein 2, chloroplastic.